Here is a 302-residue protein sequence, read N- to C-terminus: Epoxyqueuosine reductase (302 aa).

D128 acts as the Proton donor in catalysis. One can recognise a 4Fe-4S ferredoxin-type 1 domain in the interval 170–202 (LPLQADGPIRDYCGTCTACIDACPTDAITPYEV). Residues C182, C185, C188, C192, C207, C234, C237, and C241 each coordinate [4Fe-4S] cluster. The region spanning 221–251 (NEFKGKMENWIFGCDICQDVCPWNSFARPHS) is the 4Fe-4S ferredoxin-type 2 domain.

Belongs to the QueG family. As to quaternary structure, monomer. Requires cob(II)alamin as cofactor. [4Fe-4S] cluster is required as a cofactor.

The protein localises to the cytoplasm. The enzyme catalyses epoxyqueuosine(34) in tRNA + AH2 = queuosine(34) in tRNA + A + H2O. The protein operates within tRNA modification; tRNA-queuosine biosynthesis. Catalyzes the conversion of epoxyqueuosine (oQ) to queuosine (Q), which is a hypermodified base found in the wobble positions of tRNA(Asp), tRNA(Asn), tRNA(His) and tRNA(Tyr). This Leadbetterella byssophila (strain DSM 17132 / JCM 16389 / KACC 11308 / NBRC 106382 / 4M15) protein is Epoxyqueuosine reductase.